A 443-amino-acid chain; its full sequence is ATP-dependent protease ATPase subunit HslU (443 aa).

Residues isoleucine 18, 60–65 (GVGKTE), aspartate 256, glutamate 321, and arginine 393 contribute to the ATP site.

Belongs to the ClpX chaperone family. HslU subfamily. As to quaternary structure, a double ring-shaped homohexamer of HslV is capped on each side by a ring-shaped HslU homohexamer. The assembly of the HslU/HslV complex is dependent on binding of ATP.

The protein resides in the cytoplasm. In terms of biological role, ATPase subunit of a proteasome-like degradation complex; this subunit has chaperone activity. The binding of ATP and its subsequent hydrolysis by HslU are essential for unfolding of protein substrates subsequently hydrolyzed by HslV. HslU recognizes the N-terminal part of its protein substrates and unfolds these before they are guided to HslV for hydrolysis. In Nitrosospira multiformis (strain ATCC 25196 / NCIMB 11849 / C 71), this protein is ATP-dependent protease ATPase subunit HslU.